Consider the following 303-residue polypeptide: Phytochrome-associated serine/threonine-protein phosphatase 3 (303 aa).

Zn(2+) contacts are provided by aspartate 50, histidine 52, aspartate 78, and asparagine 110. The active-site Proton donor is the histidine 111. Residues histidine 160 and histidine 234 each coordinate Zn(2+).

Belongs to the PPP phosphatase family. PP-6 (PP-V) subfamily. In terms of assembly, interacts with PHYA and PHYB, mostly when they are phosphorylated and in Pfr forms. Interacts with TAP46. Interacts with NRP. Interacts with PIN1 and PIN2. Interacts with ABI5. Interacts with PIF3 and PIF4. Protein phosphatase 6 (PP6) holoenzyme is a heterotrimeric complex formed by the catalytic subunit FYPP, a SAPS domain-containing subunit (SAL) and a protein phosphatase 2A regulatory subunit A (PP2AA). The cofactor is Zn(2+). Mostly expressed in flowers. Also detected to a lower extent in stems and leaves. Expressed in roots.

It is found in the cytoplasm. It carries out the reaction O-phospho-L-seryl-[protein] + H2O = L-seryl-[protein] + phosphate. The catalysed reaction is O-phospho-L-threonyl-[protein] + H2O = L-threonyl-[protein] + phosphate. In terms of biological role, catalytic subunit of protein phosphatase 6 (PP6). Dephosphorylates phosphorylated phytochromes, with a preference toward Pfr forms. Plays a major role in the photoperiodic control of flowering time in long days by modulating phytochrome signals in flowering time control. Involved in the regulation of polar auxin transport in roots. Dephosphorylates directly the auxin efflux carriers PIN1 and PIN2, thus promoting their proper polar localization in root cell plasma membrane. Acts antagonistically with the protein kinase PID to regulate the reversible phosphorylation of PIN and polar targeting, subsequently impacting polar auxin transport and plant development. Involved in the regulation of abscisic acid (ABA) signaling during seed germination and postgermination seedling growth. Functions as a negative regulator of ABA signaling through direct dephosphorylation and destabilization of ABI5 protein. Acts antagonistically with the protein kinase SRK2E/SNRK2.6 to regulate ABI5 phosphorylation and ABA responses. Involved in the regulation of phosphorylation status in hypocotyl phototropism. Involved in the negative regulation of photomorphogenesis by controlling the stability and transcriptional activity of PIF3 and PIF4 proteins in the dark, via the regulation of their phosphorylation status. This chain is Phytochrome-associated serine/threonine-protein phosphatase 3, found in Arabidopsis thaliana (Mouse-ear cress).